A 152-amino-acid polypeptide reads, in one-letter code: MRAVIQRAKEAKVTVGGEVVGAIDAGFVVLLGITHEDTEDDAAYLAEKIAHLRVFEDEDGKMNRSLLDVGGAVLSVSQFTLYGDCRKGRRPNFMAAAKPDHALPLYEAFNAALRERGVHVETGVFGAMMDVSLTNDGPVTLIIDSSEKPGNR.

Residues 137-138 (GP) carry the Gly-cisPro motif, important for rejection of L-amino acids motif.

It belongs to the DTD family. Homodimer.

Its subcellular location is the cytoplasm. It catalyses the reaction glycyl-tRNA(Ala) + H2O = tRNA(Ala) + glycine + H(+). The enzyme catalyses a D-aminoacyl-tRNA + H2O = a tRNA + a D-alpha-amino acid + H(+). In terms of biological role, an aminoacyl-tRNA editing enzyme that deacylates mischarged D-aminoacyl-tRNAs. Also deacylates mischarged glycyl-tRNA(Ala), protecting cells against glycine mischarging by AlaRS. Acts via tRNA-based rather than protein-based catalysis; rejects L-amino acids rather than detecting D-amino acids in the active site. By recycling D-aminoacyl-tRNA to D-amino acids and free tRNA molecules, this enzyme counteracts the toxicity associated with the formation of D-aminoacyl-tRNA entities in vivo and helps enforce protein L-homochirality. The sequence is that of D-aminoacyl-tRNA deacylase from Thermus aquaticus.